The following is a 68-amino-acid chain: MMSKLGVLLTICMLLFPLTALPLDGDQPADRPAERMQDDFISEQHPLFNPIKRCCDWPCTIGCVPCCK.

An N-terminal signal peptide occupies residues 1 to 20; the sequence is MMSKLGVLLTICMLLFPLTA. Positions 21-51 are excised as a propeptide; it reads LPLDGDQPADRPAERMQDDFISEQHPLFNPI. Intrachain disulfides connect Cys-54-Cys-67, Cys-55-Cys-63, and Cys-59-Cys-66. The residue at position 65 (Pro-65) is a 4-hydroxyproline.

It belongs to the conotoxin M superfamily. Expressed by the venom duct.

Its subcellular location is the secreted. This chain is Conotoxin ArMMSK-01, found in Conus arenatus (Sand-dusted cone).